Consider the following 158-residue polypeptide: Large ribosomal subunit protein eL24 (158 aa).

The span at 98 to 146 (LDASHKKAEAEKAVRELKQKKANDIEKKRADRKLQGKDVKAAKKAETKK) shows a compositional bias: basic and acidic residues. The tract at residues 98 to 158 (LDASHKKAEA…QPVGAKGGKK (61 aa)) is disordered.

Belongs to the eukaryotic ribosomal protein eL24 family.

In Tetrahymena thermophila (strain SB210), this protein is Large ribosomal subunit protein eL24 (RPL24).